The following is a 331-amino-acid chain: Fructose-1,6-bisphosphatase class 1 2 (331 aa).

Positions 80, 98, 100, and 101 each coordinate Mg(2+). Residues 101–104 (DGSS) and Asn-189 each bind substrate. Glu-261 lines the Mg(2+) pocket.

It belongs to the FBPase class 1 family. In terms of assembly, homotetramer. Mg(2+) is required as a cofactor.

The protein localises to the cytoplasm. The catalysed reaction is beta-D-fructose 1,6-bisphosphate + H2O = beta-D-fructose 6-phosphate + phosphate. The protein operates within carbohydrate biosynthesis; Calvin cycle. In Cereibacter sphaeroides (strain ATCC 17023 / DSM 158 / JCM 6121 / CCUG 31486 / LMG 2827 / NBRC 12203 / NCIMB 8253 / ATH 2.4.1.) (Rhodobacter sphaeroides), this protein is Fructose-1,6-bisphosphatase class 1 2.